Reading from the N-terminus, the 427-residue chain is MKTTKSKKLYKQALKLMPGGVNSPVRAFKAVGGNPLFIAKAKGSKIYDVDGNEYIDYVLSWGPLILGHAYPSVVKALKKAIEKGTSYGAPTELEIKLATLVKKAFPSIEKLRFVNSGTEATMSAIRVARGFTKRNKVIKFEGCYHGHVDGLLVSAGSGGATFSIPDSLGVPQSYTSETIVLPFNDINTFKNTLKEHWKDIACVIVEPVVGNMGCILPKDEFLKVLRNETQKYGIVLIFDEVMTGFRVSFGGAQQYYGVKPDLTCLGKVIGGGLPVGAYGGKKEIMALVAPDGGVYQAGTLSGNPIAMTAGIETLKVLSKASVYKRLEKTMQYLEEGLKDSAKQAGINVKFYRAGTMFCTYFTENEVIDAKTAKTSDTEKFKQFFLGMLQKGVYIAPSQFEAGFISLAHSEKDIEKTVQAAYKIFKKL.

Lys-267 bears the N6-(pyridoxal phosphate)lysine mark.

This sequence belongs to the class-III pyridoxal-phosphate-dependent aminotransferase family. HemL subfamily. In terms of assembly, homodimer. The cofactor is pyridoxal 5'-phosphate.

It localises to the cytoplasm. It carries out the reaction (S)-4-amino-5-oxopentanoate = 5-aminolevulinate. It participates in porphyrin-containing compound metabolism; protoporphyrin-IX biosynthesis; 5-aminolevulinate from L-glutamyl-tRNA(Glu): step 2/2. The protein is Glutamate-1-semialdehyde 2,1-aminomutase of Thermodesulfovibrio yellowstonii (strain ATCC 51303 / DSM 11347 / YP87).